A 194-amino-acid polypeptide reads, in one-letter code: Dephospho-CoA kinase (194 aa).

A DPCK domain is found at 3-194 (TIGLTGGIGS…EQVDGFWGGL (192 aa)). Residue 11–16 (GSGKST) coordinates ATP.

It belongs to the CoaE family.

The protein localises to the cytoplasm. It catalyses the reaction 3'-dephospho-CoA + ATP = ADP + CoA + H(+). The protein operates within cofactor biosynthesis; coenzyme A biosynthesis; CoA from (R)-pantothenate: step 5/5. Functionally, catalyzes the phosphorylation of the 3'-hydroxyl group of dephosphocoenzyme A to form coenzyme A. The sequence is that of Dephospho-CoA kinase from Corynebacterium jeikeium (strain K411).